A 279-amino-acid chain; its full sequence is Oxygen-dependent coproporphyrinogen-III oxidase (279 aa).

A substrate-binding site is contributed by Ser-102. The a divalent metal cation site is built by His-106 and His-116. The active-site Proton donor is His-116. Substrate is bound at residue 118 to 120; it reads NTR. Positions 149 and 179 each coordinate a divalent metal cation. Residues 244–279 form an important for dimerization region; that stretch reads YVEFNLLYDRGTKFGLMTDGNVEAILMSLPPEVKFN.

This sequence belongs to the aerobic coproporphyrinogen-III oxidase family. In terms of assembly, homodimer. A divalent metal cation serves as cofactor.

It is found in the cytoplasm. The enzyme catalyses coproporphyrinogen III + O2 + 2 H(+) = protoporphyrinogen IX + 2 CO2 + 2 H2O. The protein operates within porphyrin-containing compound metabolism; protoporphyrin-IX biosynthesis; protoporphyrinogen-IX from coproporphyrinogen-III (O2 route): step 1/1. In terms of biological role, involved in the heme biosynthesis. Catalyzes the aerobic oxidative decarboxylation of propionate groups of rings A and B of coproporphyrinogen-III to yield the vinyl groups in protoporphyrinogen-IX. This chain is Oxygen-dependent coproporphyrinogen-III oxidase, found in Rickettsia felis (strain ATCC VR-1525 / URRWXCal2) (Rickettsia azadi).